Reading from the N-terminus, the 332-residue chain is Methionine synthase (332 aa).

Residues His-211, Cys-213, and Cys-296 each contribute to the Zn(2+) site.

Belongs to the archaeal MetE family. It depends on Zn(2+) as a cofactor.

Its pathway is amino-acid biosynthesis; L-methionine biosynthesis via de novo pathway. Its function is as follows. Catalyzes the transfer of a methyl group to L-homocysteine resulting in methionine formation. The physiological methyl donor is unknown. In Saccharolobus islandicus (strain Y.G.57.14 / Yellowstone #1) (Sulfolobus islandicus), this protein is Methionine synthase.